A 475-amino-acid chain; its full sequence is Aspartyl/glutamyl-tRNA(Asn/Gln) amidotransferase subunit B (475 aa).

It belongs to the GatB/GatE family. GatB subfamily. Heterotrimer of A, B and C subunits.

The enzyme catalyses L-glutamyl-tRNA(Gln) + L-glutamine + ATP + H2O = L-glutaminyl-tRNA(Gln) + L-glutamate + ADP + phosphate + H(+). The catalysed reaction is L-aspartyl-tRNA(Asn) + L-glutamine + ATP + H2O = L-asparaginyl-tRNA(Asn) + L-glutamate + ADP + phosphate + 2 H(+). Allows the formation of correctly charged Asn-tRNA(Asn) or Gln-tRNA(Gln) through the transamidation of misacylated Asp-tRNA(Asn) or Glu-tRNA(Gln) in organisms which lack either or both of asparaginyl-tRNA or glutaminyl-tRNA synthetases. The reaction takes place in the presence of glutamine and ATP through an activated phospho-Asp-tRNA(Asn) or phospho-Glu-tRNA(Gln). The chain is Aspartyl/glutamyl-tRNA(Asn/Gln) amidotransferase subunit B from Bacillus cereus (strain ATCC 10987 / NRS 248).